Here is a 293-residue protein sequence, read N- to C-terminus: Methylsterol monooxygenase 1 (293 aa).

2 helical membrane-spanning segments follow: residues 55–75 (LIVH…FQFI) and 100–120 (GILF…YYFT). The region spanning 144–274 (GCAVIEDTWH…FTWWDRIFGT (131 aa)) is the Fatty acid hydroxylase domain. The Histidine box-1 signature appears at 157-161 (HRLLH). The Histidine box-2 motif lies at 170–174 (HKVHH). Residues 199 to 219 (FFIGIVLLCDHVILLWAWVTM) form a helical membrane-spanning segment. Positions 249–255 (HHDFHHM) match the Histidine box-3 motif.

The protein belongs to the sterol desaturase family. Fe cation is required as a cofactor. In terms of processing, ubiquitinated by MARCHF6, leading to proteasomal degradation.

It localises to the endoplasmic reticulum membrane. The catalysed reaction is 4,4-dimethyl-5alpha-cholest-7-en-3beta-ol + 6 Fe(II)-[cytochrome b5] + 3 O2 + 5 H(+) = 4alpha-carboxy-4beta-methyl-5alpha-cholest-7-ene-3beta-ol + 6 Fe(III)-[cytochrome b5] + 4 H2O. The enzyme catalyses 4,4-dimethyl-5alpha-cholesta-8,24-dien-3beta-ol + 6 Fe(II)-[cytochrome b5] + 3 O2 + 5 H(+) = 4beta-methylzymosterol-4alpha-carboxylate + 6 Fe(III)-[cytochrome b5] + 4 H2O. It carries out the reaction 4alpha-methylzymosterol + 6 Fe(II)-[cytochrome b5] + 3 O2 + 5 H(+) = 4alpha-carboxyzymosterol + 6 Fe(III)-[cytochrome b5] + 4 H2O. It catalyses the reaction 4alpha-methyl-5alpha-cholest-7-en-3beta-ol + 6 Fe(II)-[cytochrome b5] + 3 O2 + 5 H(+) = 4alpha-carboxy-5alpha-cholest-7-en-3beta-ol + 6 Fe(III)-[cytochrome b5] + 4 H2O. The catalysed reaction is 4,4-dimethyl-5alpha-cholest-8-en-3beta-ol + 6 Fe(II)-[cytochrome b5] + 3 O2 + 5 H(+) = 4alpha-carboxy-4beta-methyl-5alpha-cholest-8-en-3beta-ol + 6 Fe(III)-[cytochrome b5] + 4 H2O. The enzyme catalyses 4alpha-methyl-5alpha-cholest-8-en-3beta-ol + 6 Fe(II)-[cytochrome b5] + 3 O2 + 5 H(+) = 4alpha-carboxy-5alpha-cholest-8-ene-3beta-ol + 6 Fe(III)-[cytochrome b5] + 4 H2O. It participates in steroid biosynthesis; zymosterol biosynthesis; zymosterol from lanosterol: step 3/6. The protein operates within steroid biosynthesis; cholesterol biosynthesis. Its function is as follows. Catalyzes the three-step monooxygenation required for the demethylation of 4,4-dimethyl and 4alpha-methylsterols, which can be subsequently metabolized to cholesterol. The polypeptide is Methylsterol monooxygenase 1 (Msmo1) (Rattus norvegicus (Rat)).